Consider the following 485-residue polypeptide: Cobyric acid synthase (485 aa).

One can recognise a GATase cobBQ-type domain in the interval 249–437 (HLKIRVPVWQ…WHGLFSQPSA (189 aa)). C330 (nucleophile) is an active-site residue. H429 is an active-site residue.

The protein belongs to the CobB/CobQ family. CobQ subfamily.

Its pathway is cofactor biosynthesis; adenosylcobalamin biosynthesis. Functionally, catalyzes amidations at positions B, D, E, and G on adenosylcobyrinic A,C-diamide. NH(2) groups are provided by glutamine, and one molecule of ATP is hydrogenolyzed for each amidation. The chain is Cobyric acid synthase from Saccharophagus degradans (strain 2-40 / ATCC 43961 / DSM 17024).